We begin with the raw amino-acid sequence, 233 residues long: Superoxide dismutase [Mn], mitochondrial (233 aa).

The N-terminal 27 residues, 1 to 27 (MALRSLVTRKNLPSAFKAATGLGQLRG), are a transit peptide targeting the mitochondrion. Histidine 55, histidine 103, aspartate 192, and histidine 196 together coordinate Mn(2+).

It belongs to the iron/manganese superoxide dismutase family. As to quaternary structure, homotetramer. It depends on Mn(2+) as a cofactor. In terms of tissue distribution, present in all tissues examined (leaf, petiole, root, latex, callus) with young leaves showing the highest levels in intact plants.

It localises to the mitochondrion matrix. The catalysed reaction is 2 superoxide + 2 H(+) = H2O2 + O2. Its function is as follows. Destroys superoxide anion radicals which are normally produced within the cells and which are toxic to biological systems. This is Superoxide dismutase [Mn], mitochondrial (SODA) from Hevea brasiliensis (Para rubber tree).